The chain runs to 375 residues: MTLQHTPLNAIHRSLGARMVDFGGWDMPVNYGSQIEEHHAVRRDAGIFDVSHMCVVDLTGARVRDFLRGLLANNIDKLQTPGKALYTCMLNPKGGVIDDLIVYFFREDWFRLVVNAGTAPTDIEWITAQNAAAGTGVAITPRRSDNNAGAEPLGIVAVQGPNARAKAYAALPGTQAVGEALKPFNAGFATIDGVGEIMVARTGYTGEDGFELVVPAAQIAGVWERLLQAGVRPCGLGARDTLRLEAGMNLYGQDMDEHVSPLDAGLAWTVDLQSERDFNGKAALAANGQRDQFVGLLLRDKGGVLRAHQKVITAAGDGEITSGTFSPSLSQSIALARLPKDVAIGADVQVEIRDRRLTATVVKLPFVRNGKALVS.

This sequence belongs to the GcvT family. In terms of assembly, the glycine cleavage system is composed of four proteins: P, T, L and H.

The enzyme catalyses N(6)-[(R)-S(8)-aminomethyldihydrolipoyl]-L-lysyl-[protein] + (6S)-5,6,7,8-tetrahydrofolate = N(6)-[(R)-dihydrolipoyl]-L-lysyl-[protein] + (6R)-5,10-methylene-5,6,7,8-tetrahydrofolate + NH4(+). Its function is as follows. The glycine cleavage system catalyzes the degradation of glycine. This Ralstonia nicotianae (strain ATCC BAA-1114 / GMI1000) (Ralstonia solanacearum) protein is Aminomethyltransferase.